The sequence spans 145 residues: MKFRTIYDEERPAPVLECKDESLCLAYQCTETSIEKLVKLANQNPSYLHAFAGDPTRQPEYGECPSPLDYQDALEIVARGEEAFYSLPANIRVNFSNPMEFLSWLEDPANYDEVEKLGLLDPEKVQIRKSKLQKDQKEEVSSEEK.

The protein belongs to the microviridae B protein family.

It localises to the host cytoplasm. In terms of biological role, participates in the assembly of the viral procapsid in the cytoplasm. Released from the procapsid upon genome packaging, possibly through affinity displacement by the protein ORF8, or by proteolysis. The polypeptide is Internal scaffolding protein VP3 (Chlamydia phage 1 (Bacteriophage Chp1)).